The primary structure comprises 709 residues: Ribosomal RNA large subunit methyltransferase K/L (709 aa).

The THUMP domain maps to 43–154 (LAYRITLWTR…NGVITIAMNF (112 aa)).

It belongs to the methyltransferase superfamily. RlmKL family.

It localises to the cytoplasm. The catalysed reaction is guanosine(2445) in 23S rRNA + S-adenosyl-L-methionine = N(2)-methylguanosine(2445) in 23S rRNA + S-adenosyl-L-homocysteine + H(+). It carries out the reaction guanosine(2069) in 23S rRNA + S-adenosyl-L-methionine = N(2)-methylguanosine(2069) in 23S rRNA + S-adenosyl-L-homocysteine + H(+). Its function is as follows. Specifically methylates the guanine in position 2445 (m2G2445) and the guanine in position 2069 (m7G2069) of 23S rRNA. The sequence is that of Ribosomal RNA large subunit methyltransferase K/L from Shewanella baltica (strain OS185).